The chain runs to 245 residues: tRNA pseudouridine synthase A (245 aa).

The active-site Nucleophile is D52. Y111 contributes to the substrate binding site.

The protein belongs to the tRNA pseudouridine synthase TruA family. Homodimer.

It carries out the reaction uridine(38/39/40) in tRNA = pseudouridine(38/39/40) in tRNA. Its function is as follows. Formation of pseudouridine at positions 38, 39 and 40 in the anticodon stem and loop of transfer RNAs. The protein is tRNA pseudouridine synthase A of Rickettsia peacockii (strain Rustic).